A 378-amino-acid chain; its full sequence is N-acetyldiaminopimelate deacetylase (378 aa).

The active site involves D72. E131 serves as the catalytic Proton acceptor.

This sequence belongs to the peptidase M20A family. N-acetyldiaminopimelate deacetylase subfamily.

The catalysed reaction is N-acetyl-(2S,6S)-2,6-diaminopimelate + H2O = (2S,6S)-2,6-diaminopimelate + acetate. The protein operates within amino-acid biosynthesis; L-lysine biosynthesis via DAP pathway; LL-2,6-diaminopimelate from (S)-tetrahydrodipicolinate (acetylase route): step 3/3. Its function is as follows. Catalyzes the conversion of N-acetyl-diaminopimelate to diaminopimelate and acetate. The polypeptide is N-acetyldiaminopimelate deacetylase (Enterococcus faecalis (strain ATCC 700802 / V583)).